The sequence spans 383 residues: S-adenosylmethionine:tRNA ribosyltransferase-isomerase (383 aa).

It belongs to the QueA family. Monomer.

Its subcellular location is the cytoplasm. The catalysed reaction is 7-aminomethyl-7-carbaguanosine(34) in tRNA + S-adenosyl-L-methionine = epoxyqueuosine(34) in tRNA + adenine + L-methionine + 2 H(+). It functions in the pathway tRNA modification; tRNA-queuosine biosynthesis. Its function is as follows. Transfers and isomerizes the ribose moiety from AdoMet to the 7-aminomethyl group of 7-deazaguanine (preQ1-tRNA) to give epoxyqueuosine (oQ-tRNA). This Rickettsia prowazekii (strain Madrid E) protein is S-adenosylmethionine:tRNA ribosyltransferase-isomerase.